The sequence spans 237 residues: Nodulation protein NolA (237 aa).

The HTH merR-type domain occupies 10–79; the sequence is RWRIGELAEA…LVEIRKAMEG (70 aa). The H-T-H motif DNA-binding region spans 13–32; that stretch reads IGELAEATGVTVRTLHHYEH.

Functionally, involved in genotype-specific nodulation of soybeans. The sequence is that of Nodulation protein NolA (nolA) from Bradyrhizobium diazoefficiens (strain JCM 10833 / BCRC 13528 / IAM 13628 / NBRC 14792 / USDA 110).